Consider the following 243-residue polypeptide: Zinc import ATP-binding protein ZnuC (243 aa).

The 218-residue stretch at 8 to 225 folds into the ABC transporter domain; sequence LNLSNVSYYI…SEFQKLFGHH (218 aa). 40–47 contacts ATP; sequence GPNGAGKS.

Belongs to the ABC transporter superfamily. Zinc importer (TC 3.A.1.15.5) family. The complex is composed of two ATP-binding proteins (ZnuC), two transmembrane proteins (ZnuB) and a solute-binding protein (ZnuA).

Its subcellular location is the cell inner membrane. The catalysed reaction is Zn(2+)(out) + ATP(in) + H2O(in) = Zn(2+)(in) + ADP(in) + phosphate(in) + H(+)(in). Functionally, part of the ABC transporter complex ZnuABC involved in zinc import. Responsible for energy coupling to the transport system. The protein is Zinc import ATP-binding protein ZnuC of Psychrobacter cryohalolentis (strain ATCC BAA-1226 / DSM 17306 / VKM B-2378 / K5).